We begin with the raw amino-acid sequence, 158 residues long: Transcription elongation factor GreA (158 aa).

Positions 47 to 74 (NSEYDEAKNEQAFTEGRIIQLENMLKNA) form a coiled coil.

The protein belongs to the GreA/GreB family.

Its function is as follows. Necessary for efficient RNA polymerase transcription elongation past template-encoded arresting sites. The arresting sites in DNA have the property of trapping a certain fraction of elongating RNA polymerases that pass through, resulting in locked ternary complexes. Cleavage of the nascent transcript by cleavage factors such as GreA or GreB allows the resumption of elongation from the new 3'terminus. GreA releases sequences of 2 to 3 nucleotides. In Clostridium perfringens (strain ATCC 13124 / DSM 756 / JCM 1290 / NCIMB 6125 / NCTC 8237 / Type A), this protein is Transcription elongation factor GreA.